The sequence spans 688 residues: Potassium-transporting ATPase ATP-binding subunit (688 aa).

Helical transmembrane passes span 34 to 54, 62 to 82, 219 to 239, and 260 to 280; these read PVMF…LAIL, AMFT…ANMA, VALT…TATL, and VLVA…LSAI. The 4-aspartylphosphate intermediate role is filled by Asp-313. ATP-binding positions include Asp-350, Glu-354, 383-390, and Lys-401; that span reads FSAQTRMS. Mg(2+) contacts are provided by Asp-524 and Asp-528. The next 3 helical transmembrane spans lie at 594-614, 622-642, and 662-682; these read FAII…LNIM, AILS…PLAL, and IYGL…DLLL.

The protein belongs to the cation transport ATPase (P-type) (TC 3.A.3) family. Type IA subfamily. As to quaternary structure, the system is composed of three essential subunits: KdpA, KdpB and KdpC.

The protein localises to the cell inner membrane. The catalysed reaction is K(+)(out) + ATP + H2O = K(+)(in) + ADP + phosphate + H(+). Part of the high-affinity ATP-driven potassium transport (or Kdp) system, which catalyzes the hydrolysis of ATP coupled with the electrogenic transport of potassium into the cytoplasm. This subunit is responsible for energy coupling to the transport system and for the release of the potassium ions to the cytoplasm. This Yersinia pseudotuberculosis serotype O:1b (strain IP 31758) protein is Potassium-transporting ATPase ATP-binding subunit.